Reading from the N-terminus, the 417-residue chain is Exodeoxyribonuclease 7 large subunit (417 aa).

It belongs to the XseA family. In terms of assembly, heterooligomer composed of large and small subunits.

It is found in the cytoplasm. The catalysed reaction is Exonucleolytic cleavage in either 5'- to 3'- or 3'- to 5'-direction to yield nucleoside 5'-phosphates.. In terms of biological role, bidirectionally degrades single-stranded DNA into large acid-insoluble oligonucleotides, which are then degraded further into small acid-soluble oligonucleotides. The protein is Exodeoxyribonuclease 7 large subunit of Lactococcus lactis subsp. lactis (strain IL1403) (Streptococcus lactis).